The sequence spans 453 residues: Chromosomal replication initiator protein DnaA (453 aa).

The tract at residues 1 to 71 is domain I, interacts with DnaA modulators; the sequence is MSEKEIWEKV…QAILFDVVGY (71 aa). The domain II stretch occupies residues 71–114; it reads YEVKPHFITTEELANYSNNETATPKETTKPSTETTEDNHVLGRE. The tract at residues 115–331 is domain III, AAA+ region; sequence QFNAHNTFDT…GALTRLLAYS (217 aa). Residues Gly159, Gly161, Lys162, and Thr163 each contribute to the ATP site. The interval 332–453 is domain IV, binds dsDNA; the sequence is QLLGKPITTE…ENLEKEIRNV (122 aa).

It belongs to the DnaA family. In terms of assembly, oligomerizes as a right-handed, spiral filament on DNA at oriC.

It localises to the cytoplasm. In terms of biological role, plays an essential role in the initiation and regulation of chromosomal replication. ATP-DnaA binds to the origin of replication (oriC) to initiate formation of the DNA replication initiation complex once per cell cycle. Binds the DnaA box (a 9 base pair repeat at the origin) and separates the double-stranded (ds)DNA. Forms a right-handed helical filament on oriC DNA; dsDNA binds to the exterior of the filament while single-stranded (ss)DNA is stabiized in the filament's interior. The ATP-DnaA-oriC complex binds and stabilizes one strand of the AT-rich DNA unwinding element (DUE), permitting loading of DNA polymerase. After initiation quickly degrades to an ADP-DnaA complex that is not apt for DNA replication. Binds acidic phospholipids. The protein is Chromosomal replication initiator protein DnaA of Staphylococcus aureus (strain Mu3 / ATCC 700698).